A 201-amino-acid chain; its full sequence is 8-oxoguanine DNA glycosylase/AP lyase (201 aa).

Residues lysine 126 and aspartate 144 contribute to the active site.

It belongs to the type-2 OGG1 family.

The enzyme catalyses 2'-deoxyribonucleotide-(2'-deoxyribose 5'-phosphate)-2'-deoxyribonucleotide-DNA = a 3'-end 2'-deoxyribonucleotide-(2,3-dehydro-2,3-deoxyribose 5'-phosphate)-DNA + a 5'-end 5'-phospho-2'-deoxyribonucleoside-DNA + H(+). Catalyzes the excision of an oxidatively damaged form of guanine (7,8-dihydro-8-oxoguanine = 8-oxoG) from DNA. Also cleaves the DNA backbone at apurinic/apyrimidinic sites (AP sites). This chain is 8-oxoguanine DNA glycosylase/AP lyase, found in Metallosphaera sedula (strain ATCC 51363 / DSM 5348 / JCM 9185 / NBRC 15509 / TH2).